Reading from the N-terminus, the 361-residue chain is MYAVEDRHHPVPPPLSMDRISAPSVQYPSGTTSLRQSDHLAPVSNYQDGRSWSLQVVQQPIRARMCGFGDKVGDFSAVILLPLPNTSQDRRPITPPPCIRLIVRDAQTDKEIDIKCVQPATLIPLSFLTVSSSSEIDTSFYVLTVDLWNADGTSEVNLVKHSATSPSISTAMSSSYPPPPQSVSPTYPGYNQNQYPVGYPPQMNNYYGGQQVAYQNQYGQPVTYPQYYSGGQMPASMSPAAQPVTGGPGGMFTRNLIGSLSASAFRLTDPDNKIGVWFILQDLSVRTEGTFRLKMSFVDVGTSTETSNGAPVIEPHQSWPRFSLNPSRSSPPKSSPVLLRAPSSASALRYRVSRSPFARTE.

Disordered regions lie at residues 1-36 (MYAVEDRHHPVPPPLSMDRISAPSVQYPSGTTSLRQ) and 308-340 (NGAPVIEPHQSWPRFSLNPSRSSPPKSSPVLLR). Over residues 23–35 (PSVQYPSGTTSLR) the composition is skewed to polar residues. One can recognise a Velvet domain in the interval 47-353 (QDGRSWSLQV…SASALRYRVS (307 aa)). Residues 323 to 336 (SLNPSRSSPPKSSP) are compositionally biased toward low complexity.

The protein belongs to the velvet family. VelB subfamily. In terms of assembly, component of the heterotrimeric velvet complex composed of laeA, veA and velB; VeA acting as a bridging protein between laeA and velB. Interacts with velA. Forms a heterodimeric complex with vosA; the formation of the velB-vosA complex is light-dependent. Interacts with vosA.

It is found in the nucleus. The protein localises to the cytoplasm. Functionally, component of the velvet transcription factor complex that controls sexual/asexual developmental ratio in response to light, promoting sexual development in the darkness while stimulating asexual sporulation under illumination. The velvet complex acts as a global regulator for secondary metabolite gene expression. Component of the velB-VosA heterodimeric complex that plays a dual role in activating genes associated with spore maturation and repressing certain development-associated genes. The velB-VosA complex binds DNA through the DNA-binding domain of vosA that recognizes an 11-nucleotide consensus sequence 5'-CTGGCCGCGGC-3' consisting of two motifs in the promoters of key developmental regulatory genes. Controls conidiophore formation. In Penicillium rubens (strain ATCC 28089 / DSM 1075 / NRRL 1951 / Wisconsin 54-1255) (Penicillium chrysogenum), this protein is Velvet complex subunit B.